The chain runs to 360 residues: Phenylalanine--tRNA ligase alpha subunit (360 aa).

E260 lines the Mg(2+) pocket.

The protein belongs to the class-II aminoacyl-tRNA synthetase family. Phe-tRNA synthetase alpha subunit type 1 subfamily. Tetramer of two alpha and two beta subunits. Mg(2+) serves as cofactor.

It is found in the cytoplasm. The enzyme catalyses tRNA(Phe) + L-phenylalanine + ATP = L-phenylalanyl-tRNA(Phe) + AMP + diphosphate + H(+). The chain is Phenylalanine--tRNA ligase alpha subunit from Bradyrhizobium sp. (strain ORS 278).